A 751-amino-acid chain; its full sequence is 1,3-beta-galactosyl-N-acetylhexosamine phosphorylase (751 aa).

Residue D313 is the Proton donor of the active site.

Belongs to the glycoside hydrolase 112 family. Homodimer.

The catalysed reaction is beta-D-galactosyl-(1-&gt;3)-N-acetyl-D-glucosamine + phosphate = alpha-D-galactose 1-phosphate + N-acetyl-D-glucosamine. Functionally, reversibly phosphorolyzes lacto-N-biose to Gal1-P and N-acetylglucosamine (GlcNAc) and galacto-N-biose to Gal1-P and N-acetylgalactosamine (GalNAc). Involved in the lacto-N-biose I/galacto-N-biose (LNB/GNB) degradation pathway, which is important for host intestinal colonization by bifidobacteria. This is 1,3-beta-galactosyl-N-acetylhexosamine phosphorylase (lnpA) from Bifidobacterium longum subsp. longum (strain ATCC 15707 / DSM 20219 / JCM 1217 / NCTC 11818 / E194b).